The chain runs to 35 residues: Conotoxin Cal6.1g (35 aa).

Positions 1–8 (GLSRPSKR) are excised as a propeptide. 3 cysteine pairs are disulfide-bonded: Cys9–Cys25, Cys16–Cys29, and Cys24–Cys34.

The protein belongs to the conotoxin O1 superfamily. As to expression, expressed by the venom duct.

The protein resides in the secreted. In terms of biological role, probable neurotoxin with unknown target. Possibly targets ion channels. The chain is Conotoxin Cal6.1g from Californiconus californicus (California cone).